Here is a 269-residue protein sequence, read N- to C-terminus: Formamidopyrimidine-DNA glycosylase (269 aa).

Proline 2 (schiff-base intermediate with DNA) is an active-site residue. Residue glutamate 3 is the Proton donor of the active site. Lysine 57 functions as the Proton donor; for beta-elimination activity in the catalytic mechanism. Residues histidine 90, arginine 109, and lysine 150 each contribute to the DNA site. The segment at 235–269 (QVYGRKGEPCRVCGTPIVATKHAQRATFYCRQCQK) adopts an FPG-type zinc-finger fold. Residue arginine 259 is the Proton donor; for delta-elimination activity of the active site.

It belongs to the FPG family. In terms of assembly, monomer. Requires Zn(2+) as cofactor.

The enzyme catalyses Hydrolysis of DNA containing ring-opened 7-methylguanine residues, releasing 2,6-diamino-4-hydroxy-5-(N-methyl)formamidopyrimidine.. The catalysed reaction is 2'-deoxyribonucleotide-(2'-deoxyribose 5'-phosphate)-2'-deoxyribonucleotide-DNA = a 3'-end 2'-deoxyribonucleotide-(2,3-dehydro-2,3-deoxyribose 5'-phosphate)-DNA + a 5'-end 5'-phospho-2'-deoxyribonucleoside-DNA + H(+). In terms of biological role, involved in base excision repair of DNA damaged by oxidation or by mutagenic agents. Acts as a DNA glycosylase that recognizes and removes damaged bases. Has a preference for oxidized purines, such as 7,8-dihydro-8-oxoguanine (8-oxoG). Has AP (apurinic/apyrimidinic) lyase activity and introduces nicks in the DNA strand. Cleaves the DNA backbone by beta-delta elimination to generate a single-strand break at the site of the removed base with both 3'- and 5'-phosphates. In Escherichia coli (strain 55989 / EAEC), this protein is Formamidopyrimidine-DNA glycosylase.